A 476-amino-acid polypeptide reads, in one-letter code: MKLTLPDYDQASVLVVGDIMLDRYWYGPTGRISPEAPVPVVKVEQIEERPGGAANVAMNIAALGGHVHLVGLTGIDEPAKALNEKLTSLDVRCDFVSLPDYPTITKLRVMSRGQQMIRLDFEEGFHGVDKGLILPRLEQSLTHVKTVILSDYAKGALEHVSAMIKLARDAGKPVFIDPKGTDFERYRGATLLTPNLSEFELVAGKVTSDDELVEKGFELIERFDFEALLVTRSEHGMTLLQKGQAPLHLPTLAQEVYDVTGAGDTVISVLASSVAAGKSLADACKLANAAAGVVVAKLGTSTLSTIELTEAIYGSQDSGYGVIAETELKQAVSVARQRGETVVMTNGCFDILHAGHVAYLAEAAKLGDRLIVAVNSDSSVQGLKGPGRPVNPEDRRMAVLAGLGAVDWVVPFTEETPQRLISEILPSLLVKGGDYKPEDIAGGKEVIAAGGEVRVLSFEDGCSTSKIIEAIRGGKG.

A ribokinase region spans residues 1–319 (MKLTLPDYDQ…EAIYGSQDSG (319 aa)). 195 to 198 (NLSE) lines the ATP pocket. Aspartate 264 is an active-site residue. The cytidylyltransferase stretch occupies residues 344–476 (MTNGCFDILH…IIEAIRGGKG (133 aa)).

It in the N-terminal section; belongs to the carbohydrate kinase PfkB family. This sequence in the C-terminal section; belongs to the cytidylyltransferase family. As to quaternary structure, homodimer.

The enzyme catalyses D-glycero-beta-D-manno-heptose 7-phosphate + ATP = D-glycero-beta-D-manno-heptose 1,7-bisphosphate + ADP + H(+). It carries out the reaction D-glycero-beta-D-manno-heptose 1-phosphate + ATP + H(+) = ADP-D-glycero-beta-D-manno-heptose + diphosphate. It functions in the pathway nucleotide-sugar biosynthesis; ADP-L-glycero-beta-D-manno-heptose biosynthesis; ADP-L-glycero-beta-D-manno-heptose from D-glycero-beta-D-manno-heptose 7-phosphate: step 1/4. The protein operates within nucleotide-sugar biosynthesis; ADP-L-glycero-beta-D-manno-heptose biosynthesis; ADP-L-glycero-beta-D-manno-heptose from D-glycero-beta-D-manno-heptose 7-phosphate: step 3/4. In terms of biological role, catalyzes the phosphorylation of D-glycero-D-manno-heptose 7-phosphate at the C-1 position to selectively form D-glycero-beta-D-manno-heptose-1,7-bisphosphate. Functionally, catalyzes the ADP transfer from ATP to D-glycero-beta-D-manno-heptose 1-phosphate, yielding ADP-D-glycero-beta-D-manno-heptose. The chain is Bifunctional protein HldE from Photobacterium profundum (strain SS9).